Reading from the N-terminus, the 292-residue chain is Glutathione S-transferase L2, chloroplastic (292 aa).

Residues Met1–Leu56 constitute a chloroplast transit peptide. A GST N-terminal domain is found at Gly79–Ser160. Glutathione is bound by residues Cys89–Pro90, Asn117–Arg118, Lys131–Val132, and Glu144–Ser145. Positions Asn130–Val286 constitute a GST C-terminal domain.

The protein belongs to the GST superfamily. Lambda family.

It is found in the plastid. The protein localises to the chloroplast. The catalysed reaction is RX + glutathione = an S-substituted glutathione + a halide anion + H(+). Functionally, catalyzes the glutathione-dependent reduction of S-glutathionylquercetin to quercetin. In vitro, possesses glutathione-dependent thiol transferase activity toward 2-hydroxyethyl disulfide (HED). This Arabidopsis thaliana (Mouse-ear cress) protein is Glutathione S-transferase L2, chloroplastic (GSTL2).